The chain runs to 211 residues: Thymidylate kinase (211 aa).

7 to 14 (GIDGCGKT) contributes to the ATP binding site.

Belongs to the thymidylate kinase family.

It catalyses the reaction dTMP + ATP = dTDP + ADP. Phosphorylation of dTMP to form dTDP in both de novo and salvage pathways of dTTP synthesis. The polypeptide is Thymidylate kinase (Anaplasma marginale (strain St. Maries)).